A 139-amino-acid chain; its full sequence is Invertebrate-type lysozyme 3 (139 aa).

A signal peptide spans 1-18; that stretch reads MFVKSLVFLTIAVAYASA. In terms of domain architecture, I-type lysozyme spans 19–138; that stretch reads DCLHCICMRE…WNGIKSCCGC (120 aa). Cystine bridges form between Cys-20/Cys-106, Cys-23/Cys-138, Cys-25/Cys-31, Cys-36/Cys-45, Cys-58/Cys-86, Cys-76/Cys-82, and Cys-98/Cys-120. Glu-28 acts as the Proton donor in catalysis. The active-site Nucleophile is the Asp-39. 51 to 57 lines the substrate pocket; sequence KLPYYED. Substrate contacts are provided by residues Tyr-90 and 113-115; that span reads HNG.

It belongs to the glycosyl hydrolase 22 family. Type-I lysozyme subfamily. Expressed in pharynx grinder muscle pm7, isthmus marginal cell mc2 and pharyngeal muscle cell pm5, intestinal cells and at lower levels in coelomocytes and epidermis. Expressed at low levels in intestine.

It is found in the late endosome lumen. The protein resides in the recycling endosome lumen. Its subcellular location is the lysosome lumen. It localises to the secreted. It catalyses the reaction Hydrolysis of (1-&gt;4)-beta-linkages between N-acetylmuramic acid and N-acetyl-D-glucosamine residues in a peptidoglycan and between N-acetyl-D-glucosamine residues in chitodextrins.. Its function is as follows. Has bacteriolytic activity against Gram-positive bacteria. Plays a role in defense against bacterial pathogens. Involved in pharyngeal grinder function by enabling proper lysis of ingested bacteria. The polypeptide is Invertebrate-type lysozyme 3 (Caenorhabditis elegans).